The chain runs to 133 residues: UPF0292 protein TK1411 (133 aa).

Residues 20–100 (EGALIVEGLR…SVDIETWKEL (81 aa)) enclose the Toprim domain. 3 residues coordinate Mg(2+): Glu26, Asp69, and Asp71.

Belongs to the UPF0292 family. Mg(2+) is required as a cofactor.

The polypeptide is UPF0292 protein TK1411 (Thermococcus kodakarensis (strain ATCC BAA-918 / JCM 12380 / KOD1) (Pyrococcus kodakaraensis (strain KOD1))).